A 225-amino-acid chain; its full sequence is NAD(P)H-quinone oxidoreductase subunit K, chloroplastic (225 aa).

Positions 43, 44, 108, and 139 each coordinate [4Fe-4S] cluster.

The protein belongs to the complex I 20 kDa subunit family. NDH is composed of at least 16 different subunits, 5 of which are encoded in the nucleus. It depends on [4Fe-4S] cluster as a cofactor.

The protein localises to the plastid. Its subcellular location is the chloroplast thylakoid membrane. It carries out the reaction a plastoquinone + NADH + (n+1) H(+)(in) = a plastoquinol + NAD(+) + n H(+)(out). The catalysed reaction is a plastoquinone + NADPH + (n+1) H(+)(in) = a plastoquinol + NADP(+) + n H(+)(out). NDH shuttles electrons from NAD(P)H:plastoquinone, via FMN and iron-sulfur (Fe-S) centers, to quinones in the photosynthetic chain and possibly in a chloroplast respiratory chain. The immediate electron acceptor for the enzyme in this species is believed to be plastoquinone. Couples the redox reaction to proton translocation, and thus conserves the redox energy in a proton gradient. The sequence is that of NAD(P)H-quinone oxidoreductase subunit K, chloroplastic from Capsella bursa-pastoris (Shepherd's purse).